The chain runs to 513 residues: ATP synthase subunit alpha (513 aa).

ATP is bound at residue 171 to 178 (GDRQIGKT).

It belongs to the ATPase alpha/beta chains family. F-type ATPases have 2 components, CF(1) - the catalytic core - and CF(0) - the membrane proton channel. CF(1) has five subunits: alpha(3), beta(3), gamma(1), delta(1), epsilon(1). CF(0) has three main subunits: a(1), b(2) and c(9-12). The alpha and beta chains form an alternating ring which encloses part of the gamma chain. CF(1) is attached to CF(0) by a central stalk formed by the gamma and epsilon chains, while a peripheral stalk is formed by the delta and b chains.

The protein localises to the cell membrane. It carries out the reaction ATP + H2O + 4 H(+)(in) = ADP + phosphate + 5 H(+)(out). Its function is as follows. Produces ATP from ADP in the presence of a proton gradient across the membrane. The alpha chain is a regulatory subunit. This Wolbachia pipientis wMel protein is ATP synthase subunit alpha.